The following is a 356-amino-acid chain: Phosphate acyltransferase (356 aa).

Belongs to the PlsX family. As to quaternary structure, homodimer. Probably interacts with PlsY.

The protein localises to the cytoplasm. It carries out the reaction a fatty acyl-[ACP] + phosphate = an acyl phosphate + holo-[ACP]. It functions in the pathway lipid metabolism; phospholipid metabolism. In terms of biological role, catalyzes the reversible formation of acyl-phosphate (acyl-PO(4)) from acyl-[acyl-carrier-protein] (acyl-ACP). This enzyme utilizes acyl-ACP as fatty acyl donor, but not acyl-CoA. The sequence is that of Phosphate acyltransferase from Escherichia coli (strain K12 / DH10B).